The chain runs to 393 residues: RNA pseudouridine synthase 7 (393 aa).

The S4 RNA-binding domain maps to 49 to 118 (KTIVDLFTDE…GDITILQNEA (70 aa)). Residue Asp162 is part of the active site.

This sequence belongs to the pseudouridine synthase RluA family.

It catalyses the reaction a uridine in RNA = a pseudouridine in RNA. This is RNA pseudouridine synthase 7 from Oryza sativa subsp. japonica (Rice).